Consider the following 249-residue polypeptide: MGSRHSTYAHRPFSKRRKADDTEDSLAEREQQEAIAQFPYVEFTGRDSITCLTCQGTGYIPEQVNELVALIPHSDQRLRPQRTKQYVLLSILLCLLASGLVVFFLFPHSVLVDDDGIKVVKVTFDEQRSLVILAITATLKIRNSNFYSVAVTSLSSEVQYMNTVVGSYTTTNISLIPPRSEHLVNFTAKAEMGGPYSYVYFFCTLPYIGVHNVVVFVRTSVKISYIGHVTQSSLETHHYVDCGVNSTAV.

A disordered region spans residues 1-26 (MGSRHSTYAHRPFSKRRKADDTEDSL). A lipid anchor (N-myristoyl glycine) is attached at Gly2. Transmembrane regions (helical) follow at residues 86 to 106 (YVLL…FFLF) and 197 to 217 (SYVY…VVFV).

Belongs to the TMEM106 family. Interacts with TMEM106B.

The protein localises to the endoplasmic reticulum membrane. The protein resides in the membrane. This is Transmembrane protein 106C (TMEM106C) from Bos taurus (Bovine).